A 140-amino-acid polypeptide reads, in one-letter code: RxLR effector protein CRE9 (140 aa).

A signal peptide spans 1 to 24 (MRTSVFVALVVATFVATCISFTSA). The RxLR-dEER motif lies at 43-61 (RTLAEADDWWLASTNTEER). Residues 119 to 139 (LKILYGALLAGLIIVGVEAML) traverse the membrane as a helical segment.

Belongs to the RxLR effector family.

It localises to the secreted. The protein localises to the host cell. It is found in the membrane. Its function is as follows. Effector that is involved in host plant infection. Contributes to virulence during the early infection stage, by inhibiting plant defense responses induced by both PAMP-triggered immunity (PTI) and effector-triggered immunity (ETI). The chain is RxLR effector protein CRE9 from Phytophthora infestans (strain T30-4) (Potato late blight agent).